Here is a 193-residue protein sequence, read N- to C-terminus: uncharacterized protein (193 aa).

Positions 55–94 (PVGGAAGARSLSQALPAPAPPPPPPPGLGPSSERPWPSPW) are disordered. Over residues 71-82 (APAPPPPPPPGL) the composition is skewed to pro residues.

This is an uncharacterized protein from Homo sapiens (Human).